A 668-amino-acid polypeptide reads, in one-letter code: tRNA 5-methylaminomethyl-2-thiouridine biosynthesis bifunctional protein MnmC (668 aa).

The interval methionine 1–glutamate 245 is tRNA (mnm(5)s(2)U34)-methyltransferase. The tract at residues isoleucine 270–glycine 668 is FAD-dependent cmnm(5)s(2)U34 oxidoreductase.

This sequence in the N-terminal section; belongs to the methyltransferase superfamily. tRNA (mnm(5)s(2)U34)-methyltransferase family. In the C-terminal section; belongs to the DAO family. Requires FAD as cofactor.

The protein localises to the cytoplasm. The enzyme catalyses 5-aminomethyl-2-thiouridine(34) in tRNA + S-adenosyl-L-methionine = 5-methylaminomethyl-2-thiouridine(34) in tRNA + S-adenosyl-L-homocysteine + H(+). In terms of biological role, catalyzes the last two steps in the biosynthesis of 5-methylaminomethyl-2-thiouridine (mnm(5)s(2)U) at the wobble position (U34) in tRNA. Catalyzes the FAD-dependent demodification of cmnm(5)s(2)U34 to nm(5)s(2)U34, followed by the transfer of a methyl group from S-adenosyl-L-methionine to nm(5)s(2)U34, to form mnm(5)s(2)U34. The sequence is that of tRNA 5-methylaminomethyl-2-thiouridine biosynthesis bifunctional protein MnmC from Escherichia coli (strain SMS-3-5 / SECEC).